The primary structure comprises 396 residues: Elongation factor Tu (396 aa).

The 197-residue stretch at 10 to 206 (KPHVNVGTIG…ALDSYIPEPV (197 aa)) folds into the tr-type G domain. The segment at 19–26 (GHIDHGKT) is G1. Residue 19–26 (GHIDHGKT) coordinates GTP. Thr-26 contributes to the Mg(2+) binding site. Positions 60–64 (TKTVT) are G2. The tract at residues 83–86 (DCPG) is G3. GTP-binding positions include 83-87 (DCPGH) and 138-141 (NKCD). Residues 138-141 (NKCD) form a G4 region. The segment at 176–178 (ASL) is G5.

Belongs to the TRAFAC class translation factor GTPase superfamily. Classic translation factor GTPase family. EF-Tu/EF-1A subfamily. In terms of assembly, monomer.

It localises to the cytoplasm. The enzyme catalyses GTP + H2O = GDP + phosphate + H(+). Functionally, GTP hydrolase that promotes the GTP-dependent binding of aminoacyl-tRNA to the A-site of ribosomes during protein biosynthesis. This Sorangium cellulosum (strain So ce56) (Polyangium cellulosum (strain So ce56)) protein is Elongation factor Tu.